We begin with the raw amino-acid sequence, 234 residues long: Large ribosomal subunit protein uL1 (234 aa).

Belongs to the universal ribosomal protein uL1 family. In terms of assembly, part of the 50S ribosomal subunit.

Its function is as follows. Binds directly to 23S rRNA. The L1 stalk is quite mobile in the ribosome, and is involved in E site tRNA release. Protein L1 is also a translational repressor protein, it controls the translation of the L11 operon by binding to its mRNA. The sequence is that of Large ribosomal subunit protein uL1 from Klebsiella pneumoniae (strain 342).